The chain runs to 164 residues: Osteocalcin 2b (164 aa).

The first 18 residues, 1–18 (MKSLTLLTICAVLSVSLS), serve as a signal peptide directing secretion. The propeptide occupies 19–115 (MNDLALDVVL…LASVLLRRKR (97 aa)). Residues 30–95 (PDPAAEPAPA…EAMAEDPAAA (66 aa)) show a composition bias toward low complexity. The interval 30–99 (PDPAAEPAPA…EDPAAATEPE (70 aa)) is disordered. Positions 128-160 (QVESLSEVCELNLACEHMAETAGIVAAYTAYYG) constitute a Gla domain. Residues glutamate 130, glutamate 134, and glutamate 137 each coordinate Ca(2+). 4-carboxyglutamate is present on residues glutamate 130, glutamate 134, and glutamate 137. Cysteine 136 and cysteine 142 are oxidised to a cystine.

Belongs to the osteocalcin/matrix Gla protein family. Gamma-carboxyglutamate residues are formed by vitamin K dependent carboxylation. These residues are essential for the binding of calcium.

The protein resides in the secreted. In terms of biological role, binds strongly to apatite and calcium. The chain is Osteocalcin 2b from Oncorhynchus mykiss (Rainbow trout).